A 299-amino-acid polypeptide reads, in one-letter code: Non-structural protein V (299 aa).

The disordered stretch occupies residues 40 to 98 (SDNPGQEQATCKEEEAGASGLSKPCLSAIGSTEGGAPRIRGQGSGESDDDTETLGFPSR). The segment at 110-120 (YYVYDHSGEAV) is interaction with host STAT1. The segment covering 134–145 (GLDGDSTLSGGD) has biased composition (low complexity). Disordered regions lie at residues 134–174 (GLDG…APIS) and 204–230 (PKLG…PIKK). The segment covering 146–160 (NESENSDVDIGEPDT) has biased composition (acidic residues). 8 residues coordinate Zn(2+): H232, C251, C255, C267, C269, C272, C276, and C279.

It belongs to the paramyxoviruses V protein family. As to quaternary structure, interacts with host IFIH1/MDA5 and DHX58/LGP2; these interactions are involved in the inhibition of the host type I interferon signaling pathway. Interacts with host TYK2; this interaction inhibits the type I interferon signaling pathway without affecting the type II pathway. Interacts with host IRF7; this interaction inhibits IRF7 translocation to the nucleus. Interacts with host CHUK. Interacts with host RELA/p65; this interaction inhibits the nuclear translocation of NF-KappaB. Interacts (via N-terminus) with host STAT1 and JAK1; these interactions inhibit STAT1 phosphorylation by Jak1 and thereby the type I interferon signaling pathway. Interacts (via C-terminus) with host STAT2; this interaction is involved in the inhibition of the host type I interferon signaling pathway. Forms a complex with host PPP1CA and PPP1CC; this interaction prevents dephosphorylation of host IFIH1/MDA5 and leads to the inhibition of the host type I interferon signaling pathway. Interacts with host IRF9; this interaction prevents the binding of IRF9 to STAT2 and thereby the type I interferon signaling pathway. Interacts with host RIGI regulatory protein (via CARDs domain) and host TRIM25 (via SPRY domain); these interactions prevent TRIM25-mediated ubiquitination of RIG-I and disrupts downstream RIG-I signaling.

The protein resides in the host cytoplasm. In terms of biological role, plays an essential role in the inhibition of host immune response. Prevents the establishment of cellular antiviral state by blocking interferon-alpha/beta (IFN-alpha/beta) production and signaling pathway. Interacts with host IFIH1/MDA5 and DHX58/LGP2 to inhibit the transduction pathway involved in the activation of IFN-beta promoter, thus protecting the virus against cell antiviral state. Blocks the type I interferon signaling pathway by interacting with host TYK2 and thereby inhibiting downstream STAT1 and STAT2 phosphorylation. Blocks the type I interferon signaling pathway by disrupting the RIG-I signaling pathway. Moderately affects the type II interferon signaling. Prevents PP1alpha/gamma-mediated dephosphorylation of host IFIH1/MDA5 and thus blocks its activation. The polypeptide is Non-structural protein V (P/V) (Measles virus (strain IP-3-Ca) (MeV)).